A 453-amino-acid chain; its full sequence is tRNA modification GTPase MnmE (453 aa).

(6S)-5-formyl-5,6,7,8-tetrahydrofolate-binding residues include Arg22, Glu79, and Lys119. Residues 215–376 enclose the TrmE-type G domain; the sequence is GMKVVIAGRP…LQQHLKSLMG (162 aa). Asn225 is a binding site for K(+). GTP is bound by residues 225-230, 244-250, 269-272, and 334-337; these read NAGKSS, TEIAGTT, DTAG, and NKAD. Ser229 is a binding site for Mg(2+). Positions 244, 246, and 249 each coordinate K(+). Mg(2+) is bound at residue Thr250. A (6S)-5-formyl-5,6,7,8-tetrahydrofolate-binding site is contributed by Lys453.

The protein belongs to the TRAFAC class TrmE-Era-EngA-EngB-Septin-like GTPase superfamily. TrmE GTPase family. As to quaternary structure, homodimer. Heterotetramer of two MnmE and two MnmG subunits. K(+) serves as cofactor.

Its subcellular location is the cytoplasm. Functionally, exhibits a very high intrinsic GTPase hydrolysis rate. Involved in the addition of a carboxymethylaminomethyl (cmnm) group at the wobble position (U34) of certain tRNAs, forming tRNA-cmnm(5)s(2)U34. In Shewanella woodyi (strain ATCC 51908 / MS32), this protein is tRNA modification GTPase MnmE.